The primary structure comprises 287 residues: ATP synthase gamma chain (287 aa).

This sequence belongs to the ATPase gamma chain family. As to quaternary structure, F-type ATPases have 2 components, CF(1) - the catalytic core - and CF(0) - the membrane proton channel. CF(1) has five subunits: alpha(3), beta(3), gamma(1), delta(1), epsilon(1). CF(0) has three main subunits: a, b and c.

It localises to the cell inner membrane. Its function is as follows. Produces ATP from ADP in the presence of a proton gradient across the membrane. The gamma chain is believed to be important in regulating ATPase activity and the flow of protons through the CF(0) complex. The sequence is that of ATP synthase gamma chain from Geotalea daltonii (strain DSM 22248 / JCM 15807 / FRC-32) (Geobacter daltonii).